The chain runs to 264 residues: 3-methyl-2-oxobutanoate hydroxymethyltransferase (264 aa).

Mg(2+) is bound by residues D45 and D84. 3-methyl-2-oxobutanoate is bound by residues 45 to 46, D84, and K112; that span reads DS. Mg(2+) is bound at residue E114. The active-site Proton acceptor is the E181.

The protein belongs to the PanB family. Homodecamer; pentamer of dimers. It depends on Mg(2+) as a cofactor.

It is found in the cytoplasm. The enzyme catalyses 3-methyl-2-oxobutanoate + (6R)-5,10-methylene-5,6,7,8-tetrahydrofolate + H2O = 2-dehydropantoate + (6S)-5,6,7,8-tetrahydrofolate. The protein operates within cofactor biosynthesis; (R)-pantothenate biosynthesis; (R)-pantoate from 3-methyl-2-oxobutanoate: step 1/2. Its function is as follows. Catalyzes the reversible reaction in which hydroxymethyl group from 5,10-methylenetetrahydrofolate is transferred onto alpha-ketoisovalerate to form ketopantoate. The protein is 3-methyl-2-oxobutanoate hydroxymethyltransferase of Shewanella halifaxensis (strain HAW-EB4).